The following is a 210-amino-acid chain: Large ribosomal subunit protein uL4 (210 aa).

Belongs to the universal ribosomal protein uL4 family. As to quaternary structure, part of the 50S ribosomal subunit.

One of the primary rRNA binding proteins, this protein initially binds near the 5'-end of the 23S rRNA. It is important during the early stages of 50S assembly. It makes multiple contacts with different domains of the 23S rRNA in the assembled 50S subunit and ribosome. Its function is as follows. Forms part of the polypeptide exit tunnel. The protein is Large ribosomal subunit protein uL4 (rplD) of Thermus thermophilus.